A 363-amino-acid polypeptide reads, in one-letter code: Probable butyrate kinase (363 aa).

This sequence belongs to the acetokinase family.

The protein localises to the cytoplasm. The enzyme catalyses butanoate + ATP = butanoyl phosphate + ADP. This Maridesulfovibrio salexigens (strain ATCC 14822 / DSM 2638 / NCIMB 8403 / VKM B-1763) (Desulfovibrio salexigens) protein is Probable butyrate kinase.